Consider the following 357-residue polypeptide: Methylthioribose-1-phosphate isomerase (357 aa).

Residues 49–51 (RGA), R89, and Q197 each bind substrate. D238 serves as the catalytic Proton donor. 248–249 (NK) is a substrate binding site.

It belongs to the eIF-2B alpha/beta/delta subunits family. MtnA subfamily.

The enzyme catalyses 5-(methylsulfanyl)-alpha-D-ribose 1-phosphate = 5-(methylsulfanyl)-D-ribulose 1-phosphate. The protein operates within amino-acid biosynthesis; L-methionine biosynthesis via salvage pathway; L-methionine from S-methyl-5-thio-alpha-D-ribose 1-phosphate: step 1/6. Functionally, catalyzes the interconversion of methylthioribose-1-phosphate (MTR-1-P) into methylthioribulose-1-phosphate (MTRu-1-P). The protein is Methylthioribose-1-phosphate isomerase of Leptospira biflexa serovar Patoc (strain Patoc 1 / Ames).